A 274-amino-acid chain; its full sequence is Aspartate/glutamate leucyltransferase (274 aa).

This sequence belongs to the R-transferase family. Bpt subfamily.

It localises to the cytoplasm. The catalysed reaction is N-terminal L-glutamyl-[protein] + L-leucyl-tRNA(Leu) = N-terminal L-leucyl-L-glutamyl-[protein] + tRNA(Leu) + H(+). It catalyses the reaction N-terminal L-aspartyl-[protein] + L-leucyl-tRNA(Leu) = N-terminal L-leucyl-L-aspartyl-[protein] + tRNA(Leu) + H(+). Functions in the N-end rule pathway of protein degradation where it conjugates Leu from its aminoacyl-tRNA to the N-termini of proteins containing an N-terminal aspartate or glutamate. This Ruegeria sp. (strain TM1040) (Silicibacter sp.) protein is Aspartate/glutamate leucyltransferase.